Consider the following 141-residue polypeptide: Lutropin subunit beta (141 aa).

A signal peptide spans 1 to 20 (MERLQGLLLWLLLSPSVVWA). 5 disulfides stabilise this stretch: Cys-29/Cys-77, Cys-43/Cys-92, Cys-54/Cys-108, Cys-58/Cys-110, and Cys-113/Cys-120. Asn-33 is a glycosylation site (N-linked (GlcNAc...) asparagine).

Belongs to the glycoprotein hormones subunit beta family. In terms of assembly, heterodimer of a common alpha chain and a unique beta chain which confers biological specificity to thyrotropin, lutropin, follitropin and gonadotropin.

Its subcellular location is the secreted. Promotes spermatogenesis and ovulation by stimulating the testes and ovaries to synthesize steroids. The protein is Lutropin subunit beta (Lhb) of Mus musculus (Mouse).